We begin with the raw amino-acid sequence, 364 residues long: Melatonin receptor type 1B (364 aa).

An N-terminal signal peptide occupies residues 1 to 28 (MPDNSSIANCCAASGLAARPSWPGSAEA). At 29–45 (EPPETPRAPWVAPMLST) the chain is on the extracellular side. Residues 46 to 66 (VVIVTTAVDFVGNLLVILSVL) form a helical membrane-spanning segment. The Cytoplasmic segment spans residues 67-81 (RNRKLRNAGNLFVVN). Residues 82 to 102 (LALADLVVALYPYPLILVAIL) form a helical membrane-spanning segment. The Extracellular portion of the chain corresponds to 103–115 (HDGWVLGEIHCKA). A disulfide bridge links Cys-113 with Cys-190. A helical transmembrane segment spans residues 116–136 (SAFVMGLSVIGSVFNITAIAI). The Cytoplasmic segment spans residues 137 to 158 (NRYWCICHSATYHRACSQWHAP). Residues 159-179 (LYISLIWLLTLVALVPNFFVG) traverse the membrane as a helical segment. Residues 180 to 200 (SLEYDPRIYSCTFIQTASTQY) are Extracellular-facing. Residues 201-221 (TMAVVAIHFLLPIAVVSFCYL) traverse the membrane as a helical segment. The Cytoplasmic portion of the chain corresponds to 222 to 255 (RIWILVLQARRKAKAERKLRLRPSDLRSFLTMFA). A helical membrane pass occupies residues 256–276 (VFVVFAICWAPLNCIGLAVAI). Residues 277 to 287 (NPEAMALQIPE) are Extracellular-facing. The helical transmembrane segment at 288 to 308 (GLFVTSYFLAYFNSCLNAIVY) threads the bilayer. Residues 309–364 (GLLNQNFRREYKRILSALWSTGRCFHDASKCHLTEDLQGPVPPAAMATIPVQEGAL) lie on the Cytoplasmic side of the membrane.

This sequence belongs to the G-protein coupled receptor 1 family. Expressed in the hippocampus, kidney, and ovary.

The protein resides in the cell membrane. Functionally, high affinity receptor for melatonin. The activity of this receptor is mediated by pertussis toxin sensitive G proteins that inhibits adenylate cyclase activity. This chain is Melatonin receptor type 1B, found in Rattus norvegicus (Rat).